We begin with the raw amino-acid sequence, 62 residues long: Pelophylaxin-4 (62 aa).

Positions 1-22 (MLTLKKSMLLIFFLGTINFSLC) are cleaved as a signal peptide. A propeptide spanning residues 23-45 (EQERNADEEERRDEPEERDVEVQ) is cleaved from the precursor. Leucine 60 carries the leucine amide modification. A propeptide is located at residue glycine 61.

In terms of tissue distribution, expressed by the skin glands.

Its subcellular location is the secreted. In terms of biological role, antimicrobial peptide. This chain is Pelophylaxin-4, found in Pelophylax fukienensis (Fukien gold-striped pond frog).